We begin with the raw amino-acid sequence, 386 residues long: NADH-ubiquinone oxidoreductase 49 kDa subunit homolog (386 aa).

It belongs to the complex I 49 kDa subunit family.

The protein resides in the mitochondrion. The catalysed reaction is a ubiquinone + NADH + 5 H(+)(in) = a ubiquinol + NAD(+) + 4 H(+)(out). In terms of biological role, core subunit of the mitochondrial membrane respiratory chain NADH dehydrogenase (Complex I) that is believed to belong to the minimal assembly required for catalysis. Complex I functions in the transfer of electrons from NADH to the respiratory chain. The immediate electron acceptor for the enzyme is believed to be ubiquinone. Component of the iron-sulfur (IP) fragment of the enzyme. Component of the iron-sulfur (IP) fragment of the enzyme. In Trypanosoma brucei brucei, this protein is NADH-ubiquinone oxidoreductase 49 kDa subunit homolog (NAD7).